Here is a 132-residue protein sequence, read N- to C-terminus: UPF0102 protein Acid_2433 (132 aa).

Belongs to the UPF0102 family.

The sequence is that of UPF0102 protein Acid_2433 from Solibacter usitatus (strain Ellin6076).